The sequence spans 189 residues: NADH-quinone oxidoreductase subunit B (189 aa).

Residues C39, C40, C104, and C135 each contribute to the [4Fe-4S] cluster site.

The protein belongs to the complex I 20 kDa subunit family. NDH-1 is composed of 14 different subunits. Subunits NuoB, C, D, E, F, and G constitute the peripheral sector of the complex. [4Fe-4S] cluster is required as a cofactor.

It is found in the cell inner membrane. The catalysed reaction is a quinone + NADH + 5 H(+)(in) = a quinol + NAD(+) + 4 H(+)(out). Functionally, NDH-1 shuttles electrons from NADH, via FMN and iron-sulfur (Fe-S) centers, to quinones in the respiratory chain. The immediate electron acceptor for the enzyme in this species is believed to be a menaquinone. Couples the redox reaction to proton translocation (for every two electrons transferred, four hydrogen ions are translocated across the cytoplasmic membrane), and thus conserves the redox energy in a proton gradient. The chain is NADH-quinone oxidoreductase subunit B from Chlorobaculum parvum (strain DSM 263 / NCIMB 8327) (Chlorobium vibrioforme subsp. thiosulfatophilum).